The chain runs to 684 residues: Signal peptide peptidase-like 2C (684 aa).

A signal peptide spans 1-21 (MACLGFLLPVGFLLLISTVAG). Over 22–186 (GKYGVAHVVS…APPEPIIDYN (165 aa)) the chain is Lumenal. The 81-residue stretch at 83–163 (SPSQRPLRQT…HYADMLDILS (81 aa)) folds into the PA domain. N-linked (GlcNAc...) asparagine glycosylation is present at Asn-100. The chain crosses the membrane as a helical span at residues 187–207 (MLVIFILAVGTVAAGGYWAGL). Residues 208–253 (TEANRLQRRRARRGGGSGGHHQLQEAAAAEGAQKEDNEDIPVDFTP) lie on the Cytoplasmic side of the membrane. The disordered stretch occupies residues 216–242 (RRARRGGGSGGHHQLQEAAAAEGAQKE). The segment covering 227–238 (HHQLQEAAAAEG) has biased composition (low complexity). Residues 254–274 (AMTGVVVTLSCSLMLLLYFFY) traverse the membrane as a helical segment. Residues 275-276 (DH) are Lumenal-facing. A helical membrane pass occupies residues 277–297 (FVYVTIGIFGLGAGIGLYSCL). Residues 298–319 (SPLVCRLSLRQYQRPPHSLWAS) lie on the Cytoplasmic side of the membrane. The chain crosses the membrane as a helical span at residues 320-340 (LPLPLLLLASLCATVIIFWVA). The Lumenal portion of the chain corresponds to 341 to 346 (YRNEDR). The chain crosses the membrane as a helical span at residues 347–365 (WAWLLQDTLGISYCLFVLH). The Cytoplasmic portion of the chain corresponds to 366–376 (RVRLPTLKNCS). A helical transmembrane segment spans residues 377–397 (SFLLALLAFDVFFVFVTPFFT). The active site involves Asp-386. Residues 398–439 (KTGESIMAQVALGPAESSSHERLPMVLKVPRLRVSALTLCSQ) are Lumenal-facing. The chain crosses the membrane as a helical span at residues 440–460 (PFSILGFGDIVVPGFLVAYCC). Residue Asp-448 is part of the active site. The Cytoplasmic segment spans residues 461-472 (RFDVQVCSRQIY). The helical transmembrane segment at 473–493 (FVACTVAYAVGLLVTFMAMVL) threads the bilayer. The Lumenal segment spans residues 494 to 495 (MQ). A helical membrane pass occupies residues 496–516 (MGQPALLYLVSSTLLTSLAVA). The PAL signature appears at 499–501 (PAL). Residues 517-684 (ACRQELSLFW…RKSMSTQAPL (168 aa)) lie on the Cytoplasmic side of the membrane. Residues 548 to 614 (KQEGAADAHT…SDAHLDPNEL (67 aa)) form a disordered region. The segment covering 582 to 592 (EIVTISENEAT) has biased composition (polar residues). The span at 594-611 (PEDRSDSSEGWSDAHLDP) shows a compositional bias: basic and acidic residues.

The protein belongs to the peptidase A22B family. Interacts (via active sites) with FREY; the interaction stabilizes FREY1 protein and inhibits SPPL2C proteolytic activity. Post-translationally, glycosylated. In terms of tissue distribution, highly expressed in testis where it is primarily localised in spermatids (at protein level).

The protein resides in the endoplasmic reticulum membrane. Functionally, sperm-specific intramembrane-cleaving aspartic protease (I-CLiP) that cleaves distinct tail-anchored proteins and SNARE proteins. In elongated spermatids, modulates intracellular Ca(2+) homeostasis by controlling PLN abundance through proteolytic cleavage. During spermatogenesis, processes SNARE proteins and impacts vesicular trafficking which supports compartmental reorganization in maturating spermatids and may play a role in formation of the acrosome. In terms of biological role, in round spermatids, acts as a scaffold protein supporting FREY1 in IZUMO1 recruitment at the endoplasmic reticulum membrane and coordination of IZUMO1 complex assembly. Stabilizes FREY1 at the endoplasmic reticulum membrane through interaction. May recruit IZUMO1 interaction partners. This is Signal peptide peptidase-like 2C from Homo sapiens (Human).